We begin with the raw amino-acid sequence, 776 residues long: 5-methyltetrahydropteroyltriglutamate--homocysteine methyltransferase (776 aa).

5-methyltetrahydropteroyltri-L-glutamate-binding positions include 13–16 and Lys-127; that span reads RELK. L-homocysteine contacts are provided by residues 450 to 452 and Glu-503; that span reads IGS. Residues 450 to 452 and Glu-503 contribute to the L-methionine site; that span reads IGS. Residue Trp-580 participates in 5-methyltetrahydropteroyltri-L-glutamate binding. Asp-618 is an L-homocysteine binding site. Asp-618 lines the L-methionine pocket. Residue Glu-624 participates in 5-methyltetrahydropteroyltri-L-glutamate binding. Residues His-660, Cys-662, and Glu-684 each coordinate Zn(2+). Catalysis depends on His-713, which acts as the Proton donor. Residue Cys-745 participates in Zn(2+) binding.

This sequence belongs to the vitamin-B12 independent methionine synthase family. The cofactor is Zn(2+).

The enzyme catalyses 5-methyltetrahydropteroyltri-L-glutamate + L-homocysteine = tetrahydropteroyltri-L-glutamate + L-methionine. It functions in the pathway amino-acid biosynthesis; L-methionine biosynthesis via de novo pathway; L-methionine from L-homocysteine (MetE route): step 1/1. Functionally, catalyzes the transfer of a methyl group from 5-methyltetrahydrofolate to homocysteine resulting in methionine formation. The protein is 5-methyltetrahydropteroyltriglutamate--homocysteine methyltransferase of Mesorhizobium japonicum (strain LMG 29417 / CECT 9101 / MAFF 303099) (Mesorhizobium loti (strain MAFF 303099)).